A 394-amino-acid polypeptide reads, in one-letter code: Elongation factor Tu (394 aa).

Residues 10 to 205 (KPHMNVGTIG…TMDNYFDLPE (196 aa)) enclose the tr-type G domain. The segment at 19–26 (GHVDHGKT) is G1. 19-26 (GHVDHGKT) is a binding site for GTP. Thr-26 is a Mg(2+) binding site. The G2 stretch occupies residues 61-65 (GITIN). Residues 82–85 (DCPG) form a G3 region. Residues 82-86 (DCPGH) and 137-140 (NKLD) each bind GTP. Positions 137-140 (NKLD) are G4. Residues 173-175 (SAF) form a G5 region.

It belongs to the TRAFAC class translation factor GTPase superfamily. Classic translation factor GTPase family. EF-Tu/EF-1A subfamily. As to quaternary structure, monomer.

The protein resides in the cytoplasm. The enzyme catalyses GTP + H2O = GDP + phosphate + H(+). Its function is as follows. GTP hydrolase that promotes the GTP-dependent binding of aminoacyl-tRNA to the A-site of ribosomes during protein biosynthesis. This Borrelia duttonii (strain Ly) protein is Elongation factor Tu.